The following is an 81-amino-acid chain: Toxin MIT1 (81 aa).

Cystine bridges form between Cys-7/Cys-19, Cys-13/Cys-31, Cys-18/Cys-59, Cys-41/Cys-67, and Cys-61/Cys-77.

It belongs to the AVIT (prokineticin) family. In terms of tissue distribution, expressed by the venom gland.

The protein localises to the secreted. Potent agonist for both PKR1/PROKR1 and PKR2/PROKR2. Potently contracts gastrointestinal (GI) smooth muscle. The polypeptide is Toxin MIT1 (Dendroaspis polylepis polylepis (Black mamba)).